The sequence spans 303 residues: Eukaryotic translation initiation factor 3 subunit G (303 aa).

Disordered stretches follow at residues 1-32 (MAAV…QTIV), 81-100 (GLSA…VGEN), 105-126 (PSAN…NAMK), and 181-215 (GAAG…AGGK). Residues 109-126 (WRKDQKDESKDANANAMK) show a composition bias toward basic and acidic residues. Residues 223–301 (ATLRVTNVSE…LILRVEFAKK (79 aa)) form the RRM domain.

The protein belongs to the eIF-3 subunit G family. In terms of assembly, component of the eukaryotic translation initiation factor 3 (eIF-3) complex.

It is found in the cytoplasm. Functionally, RNA-binding component of the eukaryotic translation initiation factor 3 (eIF-3) complex, which is involved in protein synthesis of a specialized repertoire of mRNAs and, together with other initiation factors, stimulates binding of mRNA and methionyl-tRNAi to the 40S ribosome. The eIF-3 complex specifically targets and initiates translation of a subset of mRNAs involved in cell proliferation. This subunit can bind 18S rRNA. This is Eukaryotic translation initiation factor 3 subunit G from Pyricularia oryzae (strain 70-15 / ATCC MYA-4617 / FGSC 8958) (Rice blast fungus).